Here is a 373-residue protein sequence, read N- to C-terminus: 4-hydroxy-3-methylbut-2-en-1-yl diphosphate synthase (flavodoxin) (373 aa).

[4Fe-4S] cluster-binding residues include C269, C272, C304, and E311.

This sequence belongs to the IspG family. The cofactor is [4Fe-4S] cluster.

The enzyme catalyses (2E)-4-hydroxy-3-methylbut-2-enyl diphosphate + oxidized [flavodoxin] + H2O + 2 H(+) = 2-C-methyl-D-erythritol 2,4-cyclic diphosphate + reduced [flavodoxin]. It functions in the pathway isoprenoid biosynthesis; isopentenyl diphosphate biosynthesis via DXP pathway; isopentenyl diphosphate from 1-deoxy-D-xylulose 5-phosphate: step 5/6. Its function is as follows. Converts 2C-methyl-D-erythritol 2,4-cyclodiphosphate (ME-2,4cPP) into 1-hydroxy-2-methyl-2-(E)-butenyl 4-diphosphate. The polypeptide is 4-hydroxy-3-methylbut-2-en-1-yl diphosphate synthase (flavodoxin) (Baumannia cicadellinicola subsp. Homalodisca coagulata).